The following is a 163-amino-acid chain: Nucleotide-binding protein CJE0423 (163 aa).

It belongs to the YajQ family.

In terms of biological role, nucleotide-binding protein. The protein is Nucleotide-binding protein CJE0423 of Campylobacter jejuni (strain RM1221).